The sequence spans 224 residues: 7-cyano-7-deazaguanine synthase (224 aa).

9-19 (ISGGMDSTLCA) contacts ATP. Zn(2+)-binding residues include Cys190, Cys198, Cys201, and Cys204.

The protein belongs to the QueC family. It depends on Zn(2+) as a cofactor.

The enzyme catalyses 7-carboxy-7-deazaguanine + NH4(+) + ATP = 7-cyano-7-deazaguanine + ADP + phosphate + H2O + H(+). It participates in purine metabolism; 7-cyano-7-deazaguanine biosynthesis. Its function is as follows. Catalyzes the ATP-dependent conversion of 7-carboxy-7-deazaguanine (CDG) to 7-cyano-7-deazaguanine (preQ(0)). This is 7-cyano-7-deazaguanine synthase from Campylobacter jejuni (strain RM1221).